The chain runs to 86 residues: Short neurotoxin homolog NTL1 (86 aa).

An N-terminal signal peptide occupies residues 1 to 21 (MKTLLLSLVVLTIACLDLGYT). Cystine bridges form between C24/C45, C38/C62, C66/C78, and C79/C84.

In terms of tissue distribution, expressed by the venom gland.

It localises to the secreted. The polypeptide is Short neurotoxin homolog NTL1 (Bungarus multicinctus (Many-banded krait)).